Here is a 244-residue protein sequence, read N- to C-terminus: Phosphoadenosine 5'-phosphosulfate reductase (244 aa).

The active-site Nucleophile; cysteine thiosulfonate intermediate is cysteine 239.

The protein belongs to the PAPS reductase family. CysH subfamily.

It localises to the cytoplasm. It carries out the reaction [thioredoxin]-disulfide + sulfite + adenosine 3',5'-bisphosphate + 2 H(+) = [thioredoxin]-dithiol + 3'-phosphoadenylyl sulfate. Its pathway is sulfur metabolism; hydrogen sulfide biosynthesis; sulfite from sulfate: step 3/3. Its function is as follows. Catalyzes the formation of sulfite from phosphoadenosine 5'-phosphosulfate (PAPS) using thioredoxin as an electron donor. The sequence is that of Phosphoadenosine 5'-phosphosulfate reductase from Shigella boydii serotype 4 (strain Sb227).